The following is a 987-amino-acid chain: Probable outer membrane protein PmpG (987 aa).

Residues 1-25 form the signal peptide; it reads MMQTPFHKFFLLAMLSYSLLQGGHA. In terms of domain architecture, Autotransporter spans 707-987; that stretch reads GRAYCRGIWI…GLSIGSKIRF (281 aa).

This sequence belongs to the PMP outer membrane protein family.

The protein resides in the secreted. The protein localises to the cell wall. It is found in the cell outer membrane. The chain is Probable outer membrane protein PmpG (pmpG) from Chlamydia muridarum (strain MoPn / Nigg).